The chain runs to 234 residues: Probable RNA/DNA demethylase ALKBH6 (234 aa).

The Fe2OG dioxygenase domain occupies 96–222; sequence TANHVLVNEY…RVSLTIRHVP (127 aa). Asn103 and Tyr105 together coordinate 2-oxoglutarate. Fe cation contacts are provided by His114, Asp116, and His180. 2-oxoglutarate-binding residues include Arg213 and Ser215.

The protein belongs to the alkB family. Fe(2+) is required as a cofactor.

The protein resides in the cytoplasm. Its subcellular location is the nucleus. Its function is as follows. Probable Fe(2+)/2-oxoglutarate-dependent dioxygenase involved in oxidative demethylation of nucleic acids. Binds nucleic acids with a preference for ssDNA or ssRNA to other types of DNAs. May play a role in nucleic acid damage repair. The protein is Probable RNA/DNA demethylase ALKBH6 (alkbh6) of Danio rerio (Zebrafish).